The primary structure comprises 471 residues: Argininosuccinate lyase (471 aa).

This sequence belongs to the lyase 1 family. Argininosuccinate lyase subfamily.

The protein localises to the cytoplasm. The enzyme catalyses 2-(N(omega)-L-arginino)succinate = fumarate + L-arginine. It participates in amino-acid biosynthesis; L-arginine biosynthesis; L-arginine from L-ornithine and carbamoyl phosphate: step 3/3. This Renibacterium salmoninarum (strain ATCC 33209 / DSM 20767 / JCM 11484 / NBRC 15589 / NCIMB 2235) protein is Argininosuccinate lyase.